Consider the following 208-residue polypeptide: Proteasome subunit beta 2 (208 aa).

A propeptide spans 1–14 (removed in mature form; by autocatalysis); the sequence is MGNELQLENKILKG. Catalysis depends on Thr15, which acts as the Nucleophile.

It belongs to the peptidase T1B family. The 20S proteasome core is composed of 14 alpha and 14 beta subunits that assemble into four stacked heptameric rings, resulting in a barrel-shaped structure. The two inner rings, each composed of seven catalytic beta subunits, are sandwiched by two outer rings, each composed of seven alpha subunits. The catalytic chamber with the active sites is on the inside of the barrel. Has a gated structure, the ends of the cylinder being occluded by the N-termini of the alpha-subunits. Is capped at one or both ends by the proteasome regulatory ATPase, PAN.

It is found in the cytoplasm. The enzyme catalyses Cleavage of peptide bonds with very broad specificity.. With respect to regulation, the formation of the proteasomal ATPase PAN-20S proteasome complex, via the docking of the C-termini of PAN into the intersubunit pockets in the alpha-rings, triggers opening of the gate for substrate entry. Interconversion between the open-gate and close-gate conformations leads to a dynamic regulation of the 20S proteasome proteolysis activity. Functionally, component of the proteasome core, a large protease complex with broad specificity involved in protein degradation. The chain is Proteasome subunit beta 2 from Saccharolobus solfataricus (strain ATCC 35092 / DSM 1617 / JCM 11322 / P2) (Sulfolobus solfataricus).